A 437-amino-acid polypeptide reads, in one-letter code: Doublesex- and mab-3-related transcription factor A2 (437 aa).

The segment at residues 49–96 (CARCRNHGVVSALKGHKRYCRWKDCMCAKCTLIAERQRVMAAQVALRR) is a DNA-binding region (DM). Disordered regions lie at residues 163–254 (SVTP…ARQR) and 297–317 (DKSE…PSVS). 2 stretches are compositionally biased toward low complexity: residues 179-201 (SESV…SGSE) and 223-235 (SPSS…SESG). Residues 254-289 (RTPIDILTRVFPAQKRSVLELVLQGCGGDVVQAIEQ) form the DMA domain.

This sequence belongs to the DMRT family.

The protein resides in the nucleus. In terms of biological role, may be involved in sexual development. The sequence is that of Doublesex- and mab-3-related transcription factor A2 (dmrta2) from Xenopus tropicalis (Western clawed frog).